Consider the following 979-residue polypeptide: Translation initiation factor IF-2 (979 aa).

The interval 68–392 (VKQKQGTPAS…SRAAQDAMEL (325 aa)) is disordered. Composition is skewed to basic and acidic residues over residues 102-179 (QDMR…KPEE), 217-229 (EMEKKEDTEEVFR), and 260-273 (TKEDRQREQNDADG). Polar residues predominate over residues 309–326 (PSGNKNNNRPAQQQSNAS). Residues 347–356 (DVQRQVKETL) are compositionally biased toward basic and acidic residues. The 169-residue stretch at 478–646 (ARPPIVTVMG…KVLLEADILE (169 aa)) folds into the tr-type G domain. A G1 region spans residues 487 to 494 (GHVDHGKT). 487-494 (GHVDHGKT) contacts GTP. The tract at residues 512–516 (GITQH) is G2. The segment at 534-537 (DTPG) is G3. GTP-binding positions include 534–538 (DTPGH) and 588–591 (NKID). The G4 stretch occupies residues 588–591 (NKID). Positions 624–626 (SAK) are G5.

The protein belongs to the TRAFAC class translation factor GTPase superfamily. Classic translation factor GTPase family. IF-2 subfamily.

The protein resides in the cytoplasm. One of the essential components for the initiation of protein synthesis. Protects formylmethionyl-tRNA from spontaneous hydrolysis and promotes its binding to the 30S ribosomal subunits. Also involved in the hydrolysis of GTP during the formation of the 70S ribosomal complex. This Porphyromonas gingivalis (strain ATCC 33277 / DSM 20709 / CIP 103683 / JCM 12257 / NCTC 11834 / 2561) protein is Translation initiation factor IF-2.